The chain runs to 286 residues: CDP-diacylglycerol--serine O-phosphatidyltransferase (286 aa).

Helical transmembrane passes span 15–35 (ILPSAMTVLSICAGLTAIKFA), 95–115 (MLSKWPVGWVVVLLYAVCVVL), 135–155 (EFFVGMPAPAGAVSMIGLLAL), 167–187 (VWFLSFWVTGTSILLVSGIPM), and 207–227 (LAICAAAAVLAPYLLIWVIII).

This sequence belongs to the CDP-alcohol phosphatidyltransferase class-I family.

Its subcellular location is the cell membrane. It catalyses the reaction a CDP-1,2-diacyl-sn-glycerol + L-serine = a 1,2-diacyl-sn-glycero-3-phospho-L-serine + CMP + H(+). The chain is CDP-diacylglycerol--serine O-phosphatidyltransferase (pssA) from Mycobacterium bovis (strain ATCC BAA-935 / AF2122/97).